The sequence spans 264 residues: S-adenosylmethionine decarboxylase proenzyme (264 aa).

Ser-112 acts as the Schiff-base intermediate with substrate; via pyruvic acid in catalysis. A Pyruvic acid (Ser); by autocatalysis modification is found at Ser-112. His-117 functions as the Proton acceptor; for processing activity in the catalytic mechanism. Catalysis depends on Cys-140, which acts as the Proton donor; for catalytic activity.

This sequence belongs to the prokaryotic AdoMetDC family. Type 2 subfamily. As to quaternary structure, heterooctamer of four alpha and four beta chains arranged as a tetramer of alpha/beta heterodimers. The cofactor is pyruvate. Is synthesized initially as an inactive proenzyme. Formation of the active enzyme involves a self-maturation process in which the active site pyruvoyl group is generated from an internal serine residue via an autocatalytic post-translational modification. Two non-identical subunits are generated from the proenzyme in this reaction, and the pyruvate is formed at the N-terminus of the alpha chain, which is derived from the carboxyl end of the proenzyme. The post-translation cleavage follows an unusual pathway, termed non-hydrolytic serinolysis, in which the side chain hydroxyl group of the serine supplies its oxygen atom to form the C-terminus of the beta chain, while the remainder of the serine residue undergoes an oxidative deamination to produce ammonia and the pyruvoyl group blocking the N-terminus of the alpha chain.

It carries out the reaction S-adenosyl-L-methionine + H(+) = S-adenosyl 3-(methylsulfanyl)propylamine + CO2. The protein operates within amine and polyamine biosynthesis; S-adenosylmethioninamine biosynthesis; S-adenosylmethioninamine from S-adenosyl-L-methionine: step 1/1. In terms of biological role, catalyzes the decarboxylation of S-adenosylmethionine to S-adenosylmethioninamine (dcAdoMet), the propylamine donor required for the synthesis of the polyamines spermine and spermidine from the diamine putrescine. This is S-adenosylmethionine decarboxylase proenzyme from Salmonella arizonae (strain ATCC BAA-731 / CDC346-86 / RSK2980).